We begin with the raw amino-acid sequence, 460 residues long: Bifunctional protein GlmU (460 aa).

The pyrophosphorylase stretch occupies residues 1–229 (MTNYAIILAA…FNESLGVNDR (229 aa)). Residues 8-11 (LAAG), Lys-22, Gln-72, and 77-78 (GT) each bind UDP-N-acetyl-alpha-D-glucosamine. Position 102 (Asp-102) interacts with Mg(2+). UDP-N-acetyl-alpha-D-glucosamine-binding residues include Gly-139, Glu-154, Asn-169, and Asn-227. Asn-227 is a Mg(2+) binding site. The segment at 230-250 (VALATAETVMRQRITQKHMVN) is linker. The segment at 251-460 (GVTFQNPETV…RLAHHPSRSK (210 aa)) is N-acetyltransferase. UDP-N-acetyl-alpha-D-glucosamine-binding residues include Arg-332 and Lys-350. The Proton acceptor role is filled by His-362. Positions 365 and 376 each coordinate UDP-N-acetyl-alpha-D-glucosamine. Residues Ala-379, 385 to 386 (NY), Ser-404, Ala-422, and Arg-439 contribute to the acetyl-CoA site.

It in the N-terminal section; belongs to the N-acetylglucosamine-1-phosphate uridyltransferase family. The protein in the C-terminal section; belongs to the transferase hexapeptide repeat family. In terms of assembly, homotrimer. Mg(2+) serves as cofactor.

Its subcellular location is the cytoplasm. It catalyses the reaction alpha-D-glucosamine 1-phosphate + acetyl-CoA = N-acetyl-alpha-D-glucosamine 1-phosphate + CoA + H(+). The enzyme catalyses N-acetyl-alpha-D-glucosamine 1-phosphate + UTP + H(+) = UDP-N-acetyl-alpha-D-glucosamine + diphosphate. It functions in the pathway nucleotide-sugar biosynthesis; UDP-N-acetyl-alpha-D-glucosamine biosynthesis; N-acetyl-alpha-D-glucosamine 1-phosphate from alpha-D-glucosamine 6-phosphate (route II): step 2/2. The protein operates within nucleotide-sugar biosynthesis; UDP-N-acetyl-alpha-D-glucosamine biosynthesis; UDP-N-acetyl-alpha-D-glucosamine from N-acetyl-alpha-D-glucosamine 1-phosphate: step 1/1. Its pathway is bacterial outer membrane biogenesis; LPS lipid A biosynthesis. Its function is as follows. Catalyzes the last two sequential reactions in the de novo biosynthetic pathway for UDP-N-acetylglucosamine (UDP-GlcNAc). The C-terminal domain catalyzes the transfer of acetyl group from acetyl coenzyme A to glucosamine-1-phosphate (GlcN-1-P) to produce N-acetylglucosamine-1-phosphate (GlcNAc-1-P), which is converted into UDP-GlcNAc by the transfer of uridine 5-monophosphate (from uridine 5-triphosphate), a reaction catalyzed by the N-terminal domain. The protein is Bifunctional protein GlmU of Streptococcus pyogenes serotype M18 (strain MGAS8232).